Consider the following 111-residue polypeptide: Macrodomain Ori protein (111 aa).

Belongs to the MaoP family.

Its function is as follows. Involved in the organization of the Ori region of the chromosome into a macrodomain (MD). It constrains DNA mobility in the Ori macrodomain and limits long-distance DNA interactions with other chromosomal regions. The chain is Macrodomain Ori protein from Haemophilus influenzae (strain ATCC 51907 / DSM 11121 / KW20 / Rd).